A 671-amino-acid polypeptide reads, in one-letter code: UvrABC system protein C (671 aa).

The disordered stretch occupies residues 1-20 (MPHLPDSMSPEAPAGPAPAT). Over residues 10–20 (PEAPAGPAPAT) the composition is skewed to low complexity. One can recognise a GIY-YIG domain in the interval 37-115 (PLPGVYRYFD…IKTLNPKYNI (79 aa)). Residues 232 to 267 (RQVMEALEARMMAHAEKLEFEQAAELRNQVAALSNV) enclose the UVR domain.

This sequence belongs to the UvrC family. In terms of assembly, interacts with UvrB in an incision complex.

The protein localises to the cytoplasm. The UvrABC repair system catalyzes the recognition and processing of DNA lesions. UvrC both incises the 5' and 3' sides of the lesion. The N-terminal half is responsible for the 3' incision and the C-terminal half is responsible for the 5' incision. The sequence is that of UvrABC system protein C from Albidiferax ferrireducens (strain ATCC BAA-621 / DSM 15236 / T118) (Rhodoferax ferrireducens).